Consider the following 254-residue polypeptide: Agamous-like MADS-box protein AGL9 homolog (254 aa).

The 55-residue stretch at 3 to 57 folds into the MADS-box domain; that stretch reads RGRVELKRIENKINRQVTFAKRRNGLLKKAYELSVLCDAEVALIIFSNRGKLYEF. The K-box domain occupies 91–181; the sequence is ELSSQQEYLK…RLRLADGYQM (91 aa).

The protein localises to the nucleus. Functionally, probable transcription factor active in inflorescence development and floral organogenesis. The protein is Agamous-like MADS-box protein AGL9 homolog (AGL9) of Sinapis alba (White mustard).